The chain runs to 462 residues: Steroidogenic factor 1 (462 aa).

Positions 10 to 85 form a DNA-binding region, nuclear receptor; the sequence is DELCPVCGDK…VGMRLEAVRA (76 aa). The NR C4-type zinc finger occupies 13–33; that stretch reads CPVCGDKVSGYHYGLLTCESC. N6-acetyllysine occurs at positions 34, 38, and 72. The NR C4-type zinc finger occupies 49 to 73; that stretch reads CTESQSCKIDKTQRKRCPFCRFQKC. The interval 117 to 149 is disordered; it reads GFKLETGPPMGVPPPPPPPPDYMLPPSLHAPEP. A Glycyl lysine isopeptide (Lys-Gly) (interchain with G-Cter in SUMO) cross-link involves residue lysine 119. A compositionally biased stretch (pro residues) spans 126-139; it reads MGVPPPPPPPPDYM. A Glycyl lysine isopeptide (Lys-Gly) (interchain with G-Cter in SUMO) cross-link involves residue lysine 194. Serine 203 bears the Phosphoserine; by CDK7 mark. An NR LBD domain is found at 223–460; the sequence is NVPELILQLL…NLLIEMLQAK (238 aa). 3 residues coordinate a 1,2-diacyl-sn-glycero-3-phosphocholine: glycine 342, tyrosine 437, and lysine 441.

This sequence belongs to the nuclear hormone receptor family. NR5 subfamily. In terms of assembly, binds DNA as a monomer. Part of a complex consisting of SFPQ, NONO and NR5A1. Interacts with NR0B2, NCOA2 and PPARGC1A. Interacts with DGKQ and CDK7. Binds to and activated by HIPK3. Post-translationally, acetylation stimulates the transcriptional activity. Sumoylation reduces CDK7-mediated phosphorylation on Ser-203. In terms of processing, phosphorylated on Ser-203 by CDK7. This phosphorylation promotes transcriptional activity.

The protein resides in the nucleus. Its function is as follows. Transcriptional activator. Seems to be essential for sexual differentiation and formation of the primary steroidogenic tissues. Binds to the Ad4 site found in the promoter region of steroidogenic P450 genes such as CYP11A, CYP11B and CYP21B. Also regulates the AMH/Muellerian inhibiting substance gene as well as the AHCH and STAR genes. 5'-YCAAGGYC-3' and 5'-RRAGGTCA-3' are the consensus sequences for the recognition by NR5A1. The SFPQ-NONO-NR5A1 complex binds to the CYP17 promoter and regulates basal and cAMP-dependent transcriptional activity. Binds phosphatidylcholine and phospholipids with a phosphatidylinositol (PI) headgroup, in particular PI(3,4)P2 and PI(3,4,5)P3. Activated by the phosphorylation of NR5A1 by HIPK3 leading to increased steroidogenic gene expression upon cAMP signaling pathway stimulation. This is Steroidogenic factor 1 (Nr5a1) from Rattus norvegicus (Rat).